Consider the following 340-residue polypeptide: Protein SSUH2 homolog (340 aa).

Positions 1–11 are enriched in acidic residues; that stretch reads MDRDPSEEDSM. A disordered region spans residues 1-20; it reads MDRDPSEEDSMADLSFEAES.

In terms of tissue distribution, widely expressed, with highest levels in the liver, intestine, tongue and underjaw.

It localises to the cytoplasm. The protein resides in the nucleus. In terms of biological role, plays a role in odontogenesis. This is Protein SSUH2 homolog from Mus musculus (Mouse).